The sequence spans 151 residues: UPF0735 ACT domain-containing protein SSP1116 (151 aa).

Residues 74 to 149 (TLILYVNDIV…HVSKVELISM (76 aa)) form the ACT domain.

It belongs to the UPF0735 family.

The sequence is that of UPF0735 ACT domain-containing protein SSP1116 from Staphylococcus saprophyticus subsp. saprophyticus (strain ATCC 15305 / DSM 20229 / NCIMB 8711 / NCTC 7292 / S-41).